The primary structure comprises 160 residues: Cyanate hydratase (160 aa).

Catalysis depends on residues R100, E103, and S126.

This sequence belongs to the cyanase family.

The catalysed reaction is cyanate + hydrogencarbonate + 3 H(+) = NH4(+) + 2 CO2. In terms of biological role, catalyzes the reaction of cyanate with bicarbonate to produce ammonia and carbon dioxide. This is Cyanate hydratase from Neosartorya fischeri (strain ATCC 1020 / DSM 3700 / CBS 544.65 / FGSC A1164 / JCM 1740 / NRRL 181 / WB 181) (Aspergillus fischerianus).